A 456-amino-acid chain; its full sequence is Probable glycine dehydrogenase (decarboxylating) subunit 1 (456 aa).

Belongs to the GcvP family. N-terminal subunit subfamily. As to quaternary structure, the glycine cleavage system is composed of four proteins: P, T, L and H. In this organism, the P 'protein' is a heterodimer of two subunits.

It carries out the reaction N(6)-[(R)-lipoyl]-L-lysyl-[glycine-cleavage complex H protein] + glycine + H(+) = N(6)-[(R)-S(8)-aminomethyldihydrolipoyl]-L-lysyl-[glycine-cleavage complex H protein] + CO2. Functionally, the glycine cleavage system catalyzes the degradation of glycine. The P protein binds the alpha-amino group of glycine through its pyridoxal phosphate cofactor; CO(2) is released and the remaining methylamine moiety is then transferred to the lipoamide cofactor of the H protein. The sequence is that of Probable glycine dehydrogenase (decarboxylating) subunit 1 from Legionella pneumophila (strain Corby).